The chain runs to 159 residues: UPF0260 protein Avi_1324 (159 aa).

This sequence belongs to the UPF0260 family.

The protein is UPF0260 protein Avi_1324 of Allorhizobium ampelinum (strain ATCC BAA-846 / DSM 112012 / S4) (Agrobacterium vitis (strain S4)).